Consider the following 107-residue polypeptide: Glutaredoxin 4 (107 aa).

One can recognise a Glutaredoxin domain in the interval 4–106; sequence LDKIKKQISE…TLLAEVAAKH (103 aa). Residue lysine 21 coordinates glutathione. [2Fe-2S] cluster is bound at residue cysteine 29. Residues arginine 58, phenylalanine 70, and 83–84 contribute to the glutathione site; that span reads CD.

This sequence belongs to the glutaredoxin family. Monothiol subfamily. As to quaternary structure, homodimer.

The protein localises to the cytoplasm. Monothiol glutaredoxin involved in the biogenesis of iron-sulfur clusters. This chain is Glutaredoxin 4 (grxD), found in Haemophilus influenzae (strain 86-028NP).